We begin with the raw amino-acid sequence, 303 residues long: MITAKAVKELRERTGAGMMDCKKALTETNGDMEKAVEVLREKGLAAAAKKAGRVAAEGIVKTYVSEDMKKGSIVEINCETDFVALNEEFVGFAGRVAELVANSNVNTVEELLAEKLDGDKTVQEVLTELIAKIGENMSVRRFERFSVESGLVQSYIHGGGRIGVMAELACEASSPVLAEVAKDVCMQIAAANPLFLSEADVDQESLEKEKEIYRAQALNEGKPEHIVDKMVMGRIKKYCKEVCLLDQAWVKDGDKSIAKLLEEKSKEVGSPITITKFVRFERGEGIEKKEENFAEEVAKMGGK.

The involved in Mg(2+) ion dislocation from EF-Tu stretch occupies residues 80–83 (TDFV).

Belongs to the EF-Ts family.

The protein resides in the cytoplasm. Functionally, associates with the EF-Tu.GDP complex and induces the exchange of GDP to GTP. It remains bound to the aminoacyl-tRNA.EF-Tu.GTP complex up to the GTP hydrolysis stage on the ribosome. This is Elongation factor Ts from Clostridium perfringens (strain ATCC 13124 / DSM 756 / JCM 1290 / NCIMB 6125 / NCTC 8237 / Type A).